Consider the following 908-residue polypeptide: Translation initiation factor IF-2 (908 aa).

Disordered stretches follow at residues 52–229 and 241–316; these read QSHG…AEEA and AGQY…SAQH. Residues 65-84 show a composition bias toward polar residues; it reads KSKTTSTARVTGSSGKSKSV. 6 stretches are compositionally biased toward basic and acidic residues: residues 94 to 108, 120 to 138, 176 to 185, 193 to 229, 270 to 280, and 294 to 303; these read FEKPDPEKMAEELAA, AAKDAEDRAATKKKSEERQ, IEVKPKEQPK, PKVETAVERKAREVREKEEARLREIETETRRTQAEEA, SFEKERREIKR, and KNQDEREIKN. Positions 409–578 constitute a tr-type G domain; that stretch reads TRPPVVTIMG…SLQAELMELE (170 aa). The tract at residues 418–425 is G1; the sequence is GHVDHGKT. Residue 418 to 425 coordinates GTP; the sequence is GHVDHGKT. The tract at residues 443 to 447 is G2; the sequence is GITQH. The tract at residues 464-467 is G3; that stretch reads DTPG. Residues 464–468 and 518–521 each bind GTP; these read DTPGH and NKMD. Residues 518-521 form a G4 region; the sequence is NKMD. A G5 region spans residues 554-556; it reads SAK.

Belongs to the TRAFAC class translation factor GTPase superfamily. Classic translation factor GTPase family. IF-2 subfamily.

The protein localises to the cytoplasm. In terms of biological role, one of the essential components for the initiation of protein synthesis. Protects formylmethionyl-tRNA from spontaneous hydrolysis and promotes its binding to the 30S ribosomal subunits. Also involved in the hydrolysis of GTP during the formation of the 70S ribosomal complex. The protein is Translation initiation factor IF-2 of Psychrobacter arcticus (strain DSM 17307 / VKM B-2377 / 273-4).